Here is a 276-residue protein sequence, read N- to C-terminus: Ribonuclease 3 (276 aa).

The region spanning 30-161 is the RNase III domain; the sequence is LTAFIRSLFK…LTGAIYLDRG (132 aa). Glutamate 74 is a Mg(2+) binding site. The active site involves aspartate 78. The Mg(2+) site is built by aspartate 147 and glutamate 150. Glutamate 150 is a catalytic residue. Positions 188-257 constitute a DRBM domain; the sequence is NHKSRLIEHT…AEEAMGALER (70 aa).

The protein belongs to the ribonuclease III family. As to quaternary structure, homodimer. Requires Mg(2+) as cofactor.

It is found in the cytoplasm. It carries out the reaction Endonucleolytic cleavage to 5'-phosphomonoester.. In terms of biological role, digests double-stranded RNA. Involved in the processing of primary rRNA transcript to yield the immediate precursors to the large and small rRNAs (23S and 16S). Processes some mRNAs, and tRNAs when they are encoded in the rRNA operon. Processes pre-crRNA and tracrRNA of type II CRISPR loci if present in the organism. This chain is Ribonuclease 3, found in Chlorobium luteolum (strain DSM 273 / BCRC 81028 / 2530) (Pelodictyon luteolum).